The following is a 142-amino-acid chain: MKNVSPRRNKHYKSYKPQVPLKKPVLLPQHPPYRNRRKKKYQQNKYFPDFTFLLSYPVIKIRKVALKKLQKLPHKNDFNLANSLQNCQLGQNATNLILLLLFSLDHYTPLILNLAFSLTDFSKSSNCFINLSKVYPPLKPFP.

Basic residues predominate over residues 1 to 14 (MKNVSPRRNKHYKS). The segment at 1 to 40 (MKNVSPRRNKHYKSYKPQVPLKKPVLLPQHPPYRNRRKKK) is disordered. Over residues 16 to 28 (KPQVPLKKPVLLP) the composition is skewed to low complexity.

This is an uncharacterized protein from Aquifex aeolicus (strain VF5).